The primary structure comprises 142 residues: Large ribosomal subunit protein uL13 (142 aa).

Belongs to the universal ribosomal protein uL13 family. As to quaternary structure, part of the 50S ribosomal subunit.

Its function is as follows. This protein is one of the early assembly proteins of the 50S ribosomal subunit, although it is not seen to bind rRNA by itself. It is important during the early stages of 50S assembly. The chain is Large ribosomal subunit protein uL13 from Laribacter hongkongensis (strain HLHK9).